The chain runs to 229 residues: tRNA pseudouridine synthase B (229 aa).

Asp52 functions as the Nucleophile in the catalytic mechanism.

It belongs to the pseudouridine synthase TruB family. Type 1 subfamily.

The catalysed reaction is uridine(55) in tRNA = pseudouridine(55) in tRNA. Functionally, responsible for synthesis of pseudouridine from uracil-55 in the psi GC loop of transfer RNAs. In Flavobacterium johnsoniae (strain ATCC 17061 / DSM 2064 / JCM 8514 / BCRC 14874 / CCUG 350202 / NBRC 14942 / NCIMB 11054 / UW101) (Cytophaga johnsonae), this protein is tRNA pseudouridine synthase B.